Reading from the N-terminus, the 154-residue chain is Ribosome maturation factor RimP (154 aa).

Belongs to the RimP family.

The protein resides in the cytoplasm. Functionally, required for maturation of 30S ribosomal subunits. This is Ribosome maturation factor RimP from Clostridium kluyveri (strain ATCC 8527 / DSM 555 / NBRC 12016 / NCIMB 10680 / K1).